We begin with the raw amino-acid sequence, 55 residues long: UPF0434 protein BARBAKC583_1098 (55 aa).

This sequence belongs to the UPF0434 family.

The sequence is that of UPF0434 protein BARBAKC583_1098 from Bartonella bacilliformis (strain ATCC 35685 / KC583 / Herrer 020/F12,63).